Here is a 783-residue protein sequence, read N- to C-terminus: BMP/retinoic acid-inducible neural-specific protein 2 (783 aa).

The signal sequence occupies residues methionine 1 to alanine 33. One can recognise an MACPF domain in the interval arginine 85–threonine 281. Residues asparagine 185, asparagine 354, asparagine 473, asparagine 579, asparagine 626, and asparagine 658 are each glycosylated (N-linked (GlcNAc...) asparagine).

It belongs to the BRINP family. As to expression, weakly expressed in embryonic stem (ES) cells. Strongly expressed in ES-derived neural stem cells (NSCs).

It localises to the secreted. In terms of biological role, inhibits neuronal cell proliferation by negative regulation of the cell cycle transition. The sequence is that of BMP/retinoic acid-inducible neural-specific protein 2 (Brinp2) from Mus musculus (Mouse).